Reading from the N-terminus, the 359-residue chain is 4'-phosphopantetheinyl transferase A (359 aa).

The protein belongs to the P-Pant transferase superfamily.

It catalyses the reaction apo-[ACP] + CoA = holo-[ACP] + adenosine 3',5'-bisphosphate + H(+). Its activity is regulated as follows. Activity is inhibited bythe antifunfal copmpounds PD 404,182, 6-nitroso-1,2-benzopyrone, and calmidazolium chloride with IC(50) values of 3.9 uM, 35.2 uM, and 19.2 uM, respectively. Acyl-carrier-protein synthase that transfers the 4'-phosphopantetheine moiety from coenzyme A to a Ser of an acyl-carrier-protein. The 4'-phosphopantetheine (4'-PPT) portion of CoA provides the essential prosthetic group for a number of carrier proteins and multi-domain enzymes, priming them for the acceptance of acyl building blocks in fatty acid synthesis and many aspects of secondary metabolism mediated by polyketide synthases (PKSs) and non-ribosomal peptide synthetases (NRPSs). PptA is able to transfer the cofactor to a broad range of enzymes with acyl- or peptidyl-carrier protein domains and activates target enzymes involved in the synthesis of lysine, but also secondary metabolites including gliotoxin, fumigaclavine C, fumiquinazole A, fumiquinazoline C, pyripyroprene A, fumagillin, the siderophores triacetylfusarinine C (TAFC) and ferricrocin (FC), and dihydroxy naphthalene (DHN)-melanin. Plays an essential role in virulence. The chain is 4'-phosphopantetheinyl transferase A from Aspergillus fumigatus (strain ATCC MYA-4609 / CBS 101355 / FGSC A1100 / Af293) (Neosartorya fumigata).